The following is a 35-amino-acid chain: Cupiennin-1c (35 aa).

The residue at position 35 (Glu-35) is a Glutamic acid 1-amide.

Expressed by the venom gland.

The protein localises to the secreted. In terms of biological role, has antimicrobial activity against E.coli, E.faecalis, P.aeruginosa, and S.aureus. In Cupiennius salei (American wandering spider), this protein is Cupiennin-1c.